The primary structure comprises 356 residues: A-type ATP synthase subunit C (356 aa).

This sequence belongs to the V-ATPase V0D/AC39 subunit family. Has multiple subunits with at least A(3), B(3), C, D, E, F, H, I and proteolipid K(x).

It is found in the cell membrane. Its function is as follows. Component of the A-type ATP synthase that produces ATP from ADP in the presence of a proton gradient across the membrane. The protein is A-type ATP synthase subunit C of Thermoplasma volcanium (strain ATCC 51530 / DSM 4299 / JCM 9571 / NBRC 15438 / GSS1).